Consider the following 368-residue polypeptide: Cobalt-precorrin-5B C(1)-methyltransferase (368 aa).

The protein belongs to the CbiD family.

It catalyses the reaction Co-precorrin-5B + S-adenosyl-L-methionine = Co-precorrin-6A + S-adenosyl-L-homocysteine. It functions in the pathway cofactor biosynthesis; adenosylcobalamin biosynthesis; cob(II)yrinate a,c-diamide from sirohydrochlorin (anaerobic route): step 6/10. Catalyzes the methylation of C-1 in cobalt-precorrin-5B to form cobalt-precorrin-6A. The sequence is that of Cobalt-precorrin-5B C(1)-methyltransferase from Brucella abortus (strain S19).